We begin with the raw amino-acid sequence, 180 residues long: Ribulose bisphosphate carboxylase small subunit, chloroplastic (180 aa).

The transit peptide at 1-57 (MASVVASAAVVTPFAASAASTTKSSQIVSVQAGLKAGVFGGKSEWQTKTQTNGSRVS) directs the protein to the chloroplast.

Belongs to the RuBisCO small chain family. In terms of assembly, heterohexadecamer of 8 large and 8 small subunits.

Its subcellular location is the plastid. It localises to the chloroplast. Functionally, ruBisCO catalyzes two reactions: the carboxylation of D-ribulose 1,5-bisphosphate, the primary event in carbon dioxide fixation, as well as the oxidative fragmentation of the pentose substrate. Both reactions occur simultaneously and in competition at the same active site. Although the small subunit is not catalytic it is essential for maximal activity. This is Ribulose bisphosphate carboxylase small subunit, chloroplastic from Marchantia paleacea (Liverwort).